Here is a 186-residue protein sequence, read N- to C-terminus: Ribosome-recycling factor (186 aa).

This sequence belongs to the RRF family.

Its subcellular location is the cytoplasm. Responsible for the release of ribosomes from messenger RNA at the termination of protein biosynthesis. May increase the efficiency of translation by recycling ribosomes from one round of translation to another. The polypeptide is Ribosome-recycling factor (Paracidovorax citrulli (strain AAC00-1) (Acidovorax citrulli)).